Here is a 248-residue protein sequence, read N- to C-terminus: Coenzyme F420:L-glutamate ligase (248 aa).

Residues 15-18 (IPLI), 45-46 (ET), and K50 each bind GTP. Position 115 (D115) interacts with a divalent metal cation. Residue N118 coordinates GTP. Residues D155, S156, and Q213 each contribute to the a divalent metal cation site. 211–218 (MGQSNEGI) serves as a coordination point for GTP.

It belongs to the CofE family. As to quaternary structure, homodimer. Mg(2+) serves as cofactor. Mn(2+) is required as a cofactor. Requires K(+) as cofactor.

The enzyme catalyses oxidized coenzyme F420-0 + GTP + L-glutamate = oxidized coenzyme F420-1 + GDP + phosphate + H(+). It catalyses the reaction oxidized coenzyme F420-1 + GTP + L-glutamate = oxidized coenzyme F420-2 + GDP + phosphate + H(+). The protein operates within cofactor biosynthesis; coenzyme F420 biosynthesis. Its function is as follows. Catalyzes the GTP-dependent successive addition of two or more gamma-linked L-glutamates to the L-lactyl phosphodiester of 7,8-didemethyl-8-hydroxy-5-deazariboflavin (F420-0) to form coenzyme F420-0-glutamyl-glutamate (F420-2) or polyglutamated F420 derivatives. This Methanococcus maripaludis (strain DSM 14266 / JCM 13030 / NBRC 101832 / S2 / LL) protein is Coenzyme F420:L-glutamate ligase.